Here is a 201-residue protein sequence, read N- to C-terminus: MSKKPTAGPALHKVIMVGSGGVGKSALTLQFMYDEFVEDYEPTKADSYRKKVVLDGEEVQIDILDTAGQEDYAAIRDNYFRSGEGFLCVFSITDDESFQATQEFREQILRVKNDESIPFLLVGNKCDLNDKRKVPLSECQLRAQQWAVPYVETSAKTRENVDKVFFDLMREIRSRKTEDSKATSGRAKDRCKKRRLKCTLL.

18–25 (GSGGVGKS) lines the GTP pocket. Residues 40-48 (YEPTKADSY) carry the Effector region motif. GTP contacts are provided by residues 65-69 (DTAGQ) and 124-127 (NKCD). Cys-198 carries the post-translational modification Cysteine methyl ester. A lipid anchor (S-geranylgeranyl cysteine) is attached at Cys-198. Residues 199-201 (TLL) constitute a propeptide, removed in mature form.

It belongs to the small GTPase superfamily. Ras family.

Its subcellular location is the cell membrane. The protein localises to the cleavage furrow. It is found in the midbody. It localises to the midbody ring. It carries out the reaction GTP + H2O = GDP + phosphate + H(+). This chain is Ras-related protein Ral-a (Rala), found in Drosophila melanogaster (Fruit fly).